We begin with the raw amino-acid sequence, 258 residues long: Malonyl-[acyl-carrier protein] O-methyltransferase (258 aa).

It belongs to the methyltransferase superfamily.

It carries out the reaction malonyl-[ACP] + S-adenosyl-L-methionine = malonyl-[ACP] methyl ester + S-adenosyl-L-homocysteine. It participates in cofactor biosynthesis; biotin biosynthesis. In terms of biological role, converts the free carboxyl group of a malonyl-thioester to its methyl ester by transfer of a methyl group from S-adenosyl-L-methionine (SAM). It allows to synthesize pimeloyl-ACP via the fatty acid synthetic pathway. In Haemophilus ducreyi (strain 35000HP / ATCC 700724), this protein is Malonyl-[acyl-carrier protein] O-methyltransferase.